We begin with the raw amino-acid sequence, 412 residues long: Candidapepsin-2 (412 aa).

The or 18, or 21 signal peptide spans 1 to 25 (MTTIAIFTKNVLLAIAFALFAQGAA). The propeptide at 26–61 (IPDPAKRDDNPGFVALDFEVTRKPLDVNATSELSKR) is activation peptide. Residue asparagine 53 is glycosylated (N-linked (GlcNAc...) asparagine). A Peptidase A1 domain is found at 75–383 (YGIRVSVGSN…LDKETVLSRS (309 aa)). Residue aspartate 93 is part of the active site. Cysteine 108 and cysteine 113 are oxidised to a cystine. The active site involves aspartate 273. Cysteine 311 and cysteine 345 are joined by a disulfide.

It belongs to the peptidase A1 family. Post-translationally, O-glycosylated.

It localises to the secreted. It catalyses the reaction Preferential cleavage at the carboxyl of hydrophobic amino acids, but fails to cleave 15-Leu-|-Tyr-16, 16-Tyr-|-Leu-17 and 24-Phe-|-Phe-25 of insulin B chain. Activates trypsinogen, and degrades keratin.. This is Candidapepsin-2 (SAPP2) from Candida parapsilosis (Yeast).